We begin with the raw amino-acid sequence, 139 residues long: Putative pre-16S rRNA nuclease (139 aa).

The protein belongs to the YqgF nuclease family.

The protein resides in the cytoplasm. Could be a nuclease involved in processing of the 5'-end of pre-16S rRNA. The polypeptide is Putative pre-16S rRNA nuclease (Rubrobacter xylanophilus (strain DSM 9941 / JCM 11954 / NBRC 16129 / PRD-1)).